A 549-amino-acid polypeptide reads, in one-letter code: Siroheme synthase (549 aa).

A precorrin-2 dehydrogenase /sirohydrochlorin ferrochelatase region spans residues 1 to 203 (MNTFPLFFKL…GNENEALAQL (203 aa)). Residues 22–23 (DV) and 43–44 (PS) each bind NAD(+). Ser128 is modified (phosphoserine). The segment at 247-549 (GEVYIVGAGP…DGDLEQLIIG (303 aa)) is uroporphyrinogen-III C-methyltransferase. Position 256 (Pro256) interacts with S-adenosyl-L-methionine. The active-site Proton acceptor is Asp279. Lys301 serves as the catalytic Proton donor. Residues 332-334 (GGD), Ile337, 362-363 (TA), Met414, and Ala443 each bind S-adenosyl-L-methionine.

The protein in the N-terminal section; belongs to the precorrin-2 dehydrogenase / sirohydrochlorin ferrochelatase family. It in the C-terminal section; belongs to the precorrin methyltransferase family.

It catalyses the reaction uroporphyrinogen III + 2 S-adenosyl-L-methionine = precorrin-2 + 2 S-adenosyl-L-homocysteine + H(+). The catalysed reaction is precorrin-2 + NAD(+) = sirohydrochlorin + NADH + 2 H(+). It carries out the reaction siroheme + 2 H(+) = sirohydrochlorin + Fe(2+). It participates in cofactor biosynthesis; adenosylcobalamin biosynthesis; precorrin-2 from uroporphyrinogen III: step 1/1. Its pathway is cofactor biosynthesis; adenosylcobalamin biosynthesis; sirohydrochlorin from precorrin-2: step 1/1. It functions in the pathway porphyrin-containing compound metabolism; siroheme biosynthesis; precorrin-2 from uroporphyrinogen III: step 1/1. The protein operates within porphyrin-containing compound metabolism; siroheme biosynthesis; siroheme from sirohydrochlorin: step 1/1. It participates in porphyrin-containing compound metabolism; siroheme biosynthesis; sirohydrochlorin from precorrin-2: step 1/1. Its function is as follows. Multifunctional enzyme that catalyzes the SAM-dependent methylations of uroporphyrinogen III at position C-2 and C-7 to form precorrin-2 via precorrin-1. Then it catalyzes the NAD-dependent ring dehydrogenation of precorrin-2 to yield sirohydrochlorin. Finally, it catalyzes the ferrochelation of sirohydrochlorin to yield siroheme. This Psychrobacter arcticus (strain DSM 17307 / VKM B-2377 / 273-4) protein is Siroheme synthase.